We begin with the raw amino-acid sequence, 1295 residues long: Phosphoribosylformylglycinamidine synthase (1295 aa).

Residues 305 to 327 (WPGAATGSGGEIRDEGATGRGAK) are disordered. Residues 307 to 318 (GAATGSGGEIRD) and Ala-678 each bind ATP. Positions 718, 722, and 884 each coordinate Mg(2+). Ser-886 lines the ATP pocket. The Glutamine amidotransferase type-1 domain maps to 1042–1295 (VAVLREQGVN…IFRNARKQLG (254 aa)). Cys-1135 acts as the Nucleophile in catalysis. Residues His-1260 and Glu-1262 contribute to the active site.

It in the N-terminal section; belongs to the FGAMS family. As to quaternary structure, monomer.

It localises to the cytoplasm. It catalyses the reaction N(2)-formyl-N(1)-(5-phospho-beta-D-ribosyl)glycinamide + L-glutamine + ATP + H2O = 2-formamido-N(1)-(5-O-phospho-beta-D-ribosyl)acetamidine + L-glutamate + ADP + phosphate + H(+). Its pathway is purine metabolism; IMP biosynthesis via de novo pathway; 5-amino-1-(5-phospho-D-ribosyl)imidazole from N(2)-formyl-N(1)-(5-phospho-D-ribosyl)glycinamide: step 1/2. In terms of biological role, phosphoribosylformylglycinamidine synthase involved in the purines biosynthetic pathway. Catalyzes the ATP-dependent conversion of formylglycinamide ribonucleotide (FGAR) and glutamine to yield formylglycinamidine ribonucleotide (FGAM) and glutamate. This chain is Phosphoribosylformylglycinamidine synthase, found in Escherichia coli O6:K15:H31 (strain 536 / UPEC).